A 162-amino-acid polypeptide reads, in one-letter code: MKITLRMMVLAVLTAMAMVLAACGGGGSSGGSTGGGSGSGPVTIEIGSKGEELAFDKTELTVSAGQTVTIRFKNNSAVQQHNWILVKGGEAEAANIANAGLSAGPAANYLPADKSNIIAESPLANGNETVEVTFTAPAAGTYLYICTVPGHYPLMQGKLVVN.

Residues 1–22 form the signal peptide; it reads MKITLRMMVLAVLTAMAMVLAA. Cys23 carries the N-palmitoyl cysteine lipid modification. Residue Cys23 is the site of S-diacylglycerol cysteine attachment. The Plastocyanin-like domain occupies 42–162; the sequence is VTIEIGSKGE…PLMQGKLVVN (121 aa). 4 residues coordinate Cu cation: His81, Cys146, His151, and Met155.

In terms of assembly, monomer. Cu cation serves as cofactor.

It localises to the cell membrane. Functionally, probably a soluble electron acceptor for the integral membrane protein electron transfer alternative complex III (ACIII). The chain is Auracyanin-A from Chloroflexus aurantiacus (strain ATCC 29366 / DSM 635 / J-10-fl).